The sequence spans 242 residues: Demethylmenaquinone methyltransferase (242 aa).

S-adenosyl-L-methionine-binding residues include T74 and D93.

This sequence belongs to the class I-like SAM-binding methyltransferase superfamily. MenG/UbiE family.

The enzyme catalyses a 2-demethylmenaquinol + S-adenosyl-L-methionine = a menaquinol + S-adenosyl-L-homocysteine + H(+). Its pathway is quinol/quinone metabolism; menaquinone biosynthesis; menaquinol from 1,4-dihydroxy-2-naphthoate: step 2/2. Its function is as follows. Methyltransferase required for the conversion of demethylmenaquinol (DMKH2) to menaquinol (MKH2). This chain is Demethylmenaquinone methyltransferase, found in Chlorobaculum tepidum (strain ATCC 49652 / DSM 12025 / NBRC 103806 / TLS) (Chlorobium tepidum).